The sequence spans 187 residues: Elongation factor P (187 aa).

It belongs to the elongation factor P family.

It localises to the cytoplasm. It participates in protein biosynthesis; polypeptide chain elongation. Functionally, involved in peptide bond synthesis. Stimulates efficient translation and peptide-bond synthesis on native or reconstituted 70S ribosomes in vitro. Probably functions indirectly by altering the affinity of the ribosome for aminoacyl-tRNA, thus increasing their reactivity as acceptors for peptidyl transferase. This is Elongation factor P from Synechococcus sp. (strain CC9311).